The sequence spans 333 residues: MTNAATDKSVASVARDVSTGKPGKSPDAAVHLLSGGLAGLTSAVTLQPFDLLKTRLQQQHSETSKLTIAGEIRKLSQLKELWRGAVPSALRTSVGAGLYFTTLSKMRAAVAQYNHRDSSVTSVLPKLLPMENLATGFVARAIVGYITMPITMVKTRFESNIYSYRTMGESIVGIYKDIGPDGVVHRSSLLNFFKGSVATLARDCPYAGLYVLFYEGFKNDVLVKVIPESVTGSDSRSSVINSSSAILAASVSTTITAPFDAIKTRLQLTKETSILKTTGILLREDGGVFNLFRGLSLRFGRKALSAGISWCIYEELIKSDFSQCRLFNKERLA.

The segment at 1–25 (MTNAATDKSVASVARDVSTGKPGKS) is disordered. 3 Solcar repeats span residues 26–109 (PDAA…MRAA), 127–220 (LLPM…FKND), and 236–319 (RSSV…LIKS). 6 helical membrane-spanning segments follow: residues 32–57 (LLSG…TRLQ), 84–110 (GAVP…RAAV), 133–158 (LATG…TRFE), 195–218 (GSVA…EGFK), 240–266 (INSS…KTRL), and 294–312 (GLSL…SWCI).

The protein belongs to the mitochondrial carrier (TC 2.A.29) family. SLC25A38 subfamily.

Its subcellular location is the mitochondrion inner membrane. It catalyses the reaction glycine(in) = glycine(out). Mitochondrial glycine transporter that imports glycine into the mitochondrial matrix. Plays an important role in providing glycine for the first enzymatic step in heme biosynthesis, the condensation of glycine with succinyl-CoA to produce 5-aminolevulinate (ALA) in the mitochondrial matrix. The protein is Mitochondrial glycine transporter of Scheffersomyces stipitis (strain ATCC 58785 / CBS 6054 / NBRC 10063 / NRRL Y-11545) (Yeast).